Reading from the N-terminus, the 183-residue chain is Probable GTP-binding protein EngB (183 aa).

The region spanning 17–183 (DYPEVVFVGR…KKELLSRILN (167 aa)) is the EngB-type G domain. GTP is bound by residues 25 to 32 (GRSNVGKS), 51 to 55 (GRTRA), 69 to 72 (DVPG), 137 to 140 (TKID), and 166 to 168 (SSA). Residues S32 and T53 each contribute to the Mg(2+) site.

Belongs to the TRAFAC class TrmE-Era-EngA-EngB-Septin-like GTPase superfamily. EngB GTPase family. Mg(2+) serves as cofactor.

Its function is as follows. Necessary for normal cell division and for the maintenance of normal septation. In Aquifex aeolicus (strain VF5), this protein is Probable GTP-binding protein EngB.